We begin with the raw amino-acid sequence, 229 residues long: Putative N-acetylmannosamine-6-phosphate 2-epimerase (229 aa).

It belongs to the NanE family.

It catalyses the reaction an N-acyl-D-glucosamine 6-phosphate = an N-acyl-D-mannosamine 6-phosphate. Its pathway is amino-sugar metabolism; N-acetylneuraminate degradation; D-fructose 6-phosphate from N-acetylneuraminate: step 3/5. In terms of biological role, converts N-acetylmannosamine-6-phosphate (ManNAc-6-P) to N-acetylglucosamine-6-phosphate (GlcNAc-6-P). The polypeptide is Putative N-acetylmannosamine-6-phosphate 2-epimerase (Escherichia coli O139:H28 (strain E24377A / ETEC)).